A 704-amino-acid chain; its full sequence is Elongation factor G (704 aa).

The tr-type G domain occupies 10–290 (KKVRNIGIMA…AVVDYLPSPL (281 aa)). GTP is bound by residues 19–26 (AHIDAGKT), 83–87 (DTPGH), and 137–140 (NKMD).

The protein belongs to the TRAFAC class translation factor GTPase superfamily. Classic translation factor GTPase family. EF-G/EF-2 subfamily.

It localises to the cytoplasm. Its function is as follows. Catalyzes the GTP-dependent ribosomal translocation step during translation elongation. During this step, the ribosome changes from the pre-translocational (PRE) to the post-translocational (POST) state as the newly formed A-site-bound peptidyl-tRNA and P-site-bound deacylated tRNA move to the P and E sites, respectively. Catalyzes the coordinated movement of the two tRNA molecules, the mRNA and conformational changes in the ribosome. The sequence is that of Elongation factor G from Kocuria rhizophila (strain ATCC 9341 / DSM 348 / NBRC 103217 / DC2201).